The chain runs to 293 residues: Acetyl-coenzyme A carboxylase carboxyl transferase subunit beta (293 aa).

The CoA carboxyltransferase N-terminal domain maps to 29-293 (LWSKCPECGL…GCRPMEITSA (265 aa)). Positions 33, 36, 52, and 55 each coordinate Zn(2+). The C4-type zinc finger occupies 33-55 (CPECGLVVYVKDLKGNASVCAGC).

The protein belongs to the AccD/PCCB family. As to quaternary structure, acetyl-CoA carboxylase is a heterohexamer composed of biotin carboxyl carrier protein (AccB), biotin carboxylase (AccC) and two subunits each of ACCase subunit alpha (AccA) and ACCase subunit beta (AccD). It depends on Zn(2+) as a cofactor.

Its subcellular location is the cytoplasm. It carries out the reaction N(6)-carboxybiotinyl-L-lysyl-[protein] + acetyl-CoA = N(6)-biotinyl-L-lysyl-[protein] + malonyl-CoA. It participates in lipid metabolism; malonyl-CoA biosynthesis; malonyl-CoA from acetyl-CoA: step 1/1. In terms of biological role, component of the acetyl coenzyme A carboxylase (ACC) complex. Biotin carboxylase (BC) catalyzes the carboxylation of biotin on its carrier protein (BCCP) and then the CO(2) group is transferred by the transcarboxylase to acetyl-CoA to form malonyl-CoA. This Parasynechococcus marenigrum (strain WH8102) protein is Acetyl-coenzyme A carboxylase carboxyl transferase subunit beta.